The primary structure comprises 395 residues: MAKAKFERTKPHVNIGTIGHVDHGKTTLTAAITTVLAKQGKAEARAYDQIDAAPEERERGITISTAHVEYETDNRHYAHVDCPGHADYVKNMITGAAQMDGAILVVSAADGPMPQTREHILLSRQVGVPYIVVFLNKCDMVDDEELLELVEMEVRDLLSEYDFPGDEVPVIKGSALKALEGDPAWEAKIIELMNAVDEYIPTPQREVDKPFMMPVEDVFSITGRGTVATGRVERGILKVGDQVEIIGLSEEPKATTVTGVEMFRKLLDQAEAGDNIGALLRGVSRDEVQRGQVLAKPGTITPHTKFKAQVYVLTKEEGGRHTPFFSNYRPQFYFRTTDVTGIIQLPEGVEMVMPGDNIEMTVELIAPIAIEEGTKFSIREGGRTVGAGSVSEIIE.

In terms of domain architecture, tr-type G spans 10 to 204; sequence KPHVNIGTIG…AVDEYIPTPQ (195 aa). The tract at residues 19–26 is G1; the sequence is GHVDHGKT. Residue 19–26 participates in GTP binding; the sequence is GHVDHGKT. Threonine 26 is a Mg(2+) binding site. Residues 60–64 are G2; the sequence is GITIS. The G3 stretch occupies residues 81 to 84; it reads DCPG. GTP is bound by residues 81 to 85 and 136 to 139; these read DCPGH and NKCD. Residues 136 to 139 form a G4 region; the sequence is NKCD. The interval 174–176 is G5; sequence SAL.

Belongs to the TRAFAC class translation factor GTPase superfamily. Classic translation factor GTPase family. EF-Tu/EF-1A subfamily. Monomer.

The protein resides in the cytoplasm. It catalyses the reaction GTP + H2O = GDP + phosphate + H(+). GTP hydrolase that promotes the GTP-dependent binding of aminoacyl-tRNA to the A-site of ribosomes during protein biosynthesis. This is Elongation factor Tu from Anoxybacillus flavithermus (strain DSM 21510 / WK1).